The sequence spans 180 residues: Shikimate kinase (180 aa).

Residue 14 to 19 (GAGKSC) participates in ATP binding. Mg(2+) is bound at residue S18. Residues D36, R60, and G82 each coordinate substrate. R120 lines the ATP pocket. Substrate is bound at residue R139.

The protein belongs to the shikimate kinase family. Monomer. Mg(2+) serves as cofactor.

Its subcellular location is the cytoplasm. The enzyme catalyses shikimate + ATP = 3-phosphoshikimate + ADP + H(+). Its pathway is metabolic intermediate biosynthesis; chorismate biosynthesis; chorismate from D-erythrose 4-phosphate and phosphoenolpyruvate: step 5/7. Functionally, catalyzes the specific phosphorylation of the 3-hydroxyl group of shikimic acid using ATP as a cosubstrate. This Xanthomonas euvesicatoria pv. vesicatoria (strain 85-10) (Xanthomonas campestris pv. vesicatoria) protein is Shikimate kinase.